We begin with the raw amino-acid sequence, 412 residues long: MRDIETIDTLNQLNIDLQGDVSSPLGFIAGGLHCGLRRKKVDFGWIYSTTPATATGVYTLNQFKAAPLKLTEDSINKDKALQAIIVNSAIANACTGEKGMQDALDTQAWIAEQLNIEQHLVGVASTGVIGSFLPMDKIQYATQHVLKEQYNKSEAFNQAILTTDTMTKHLSVKVEIDGTTVTIGGTAKGSGMIHPNMATMLGFITTDANIDANTLDYCLKQSIDQSFNMITVDGDSSTNDMVLCMANGQAQHTQIDALHPEWHKFVYALNFVCHYLAKSIAKDGEGATKLVTVKVKGAHDVVEARKIAKSIVSSNLVKTAVHGEDANFGRIVTAIGYASRYIEPSATHVSLCQVSVLEKGMAVDFDEQRLKEELASDNILIEATVGNGEGEAAAYGCDLSYEYVRINASYRT.

Positions 162, 188, 199, 285, 407, and 412 each coordinate substrate. Catalysis depends on threonine 199, which acts as the Nucleophile.

Belongs to the ArgJ family. In terms of assembly, heterotetramer of two alpha and two beta chains.

The protein resides in the cytoplasm. The catalysed reaction is N(2)-acetyl-L-ornithine + L-glutamate = N-acetyl-L-glutamate + L-ornithine. The enzyme catalyses L-glutamate + acetyl-CoA = N-acetyl-L-glutamate + CoA + H(+). The protein operates within amino-acid biosynthesis; L-arginine biosynthesis; L-ornithine and N-acetyl-L-glutamate from L-glutamate and N(2)-acetyl-L-ornithine (cyclic): step 1/1. Its pathway is amino-acid biosynthesis; L-arginine biosynthesis; N(2)-acetyl-L-ornithine from L-glutamate: step 1/4. Its function is as follows. Catalyzes two activities which are involved in the cyclic version of arginine biosynthesis: the synthesis of N-acetylglutamate from glutamate and acetyl-CoA as the acetyl donor, and of ornithine by transacetylation between N(2)-acetylornithine and glutamate. This is Arginine biosynthesis bifunctional protein ArgJ from Staphylococcus saprophyticus subsp. saprophyticus (strain ATCC 15305 / DSM 20229 / NCIMB 8711 / NCTC 7292 / S-41).